The primary structure comprises 246 residues: Ribonuclease PH (246 aa).

The interval 67–87 (NMLPGSTSPRKRRDRSGKVDG) is disordered. Phosphate-binding positions include Arg-88 and 126–128 (GTR).

The protein belongs to the RNase PH family. In terms of assembly, homohexameric ring arranged as a trimer of dimers.

The enzyme catalyses tRNA(n+1) + phosphate = tRNA(n) + a ribonucleoside 5'-diphosphate. In terms of biological role, phosphorolytic 3'-5' exoribonuclease that plays an important role in tRNA 3'-end maturation. Removes nucleotide residues following the 3'-CCA terminus of tRNAs; can also add nucleotides to the ends of RNA molecules by using nucleoside diphosphates as substrates, but this may not be physiologically important. Probably plays a role in initiation of 16S rRNA degradation (leading to ribosome degradation) during starvation. In Rhodopirellula baltica (strain DSM 10527 / NCIMB 13988 / SH1), this protein is Ribonuclease PH.